The sequence spans 289 residues: ATP synthase gamma chain (289 aa).

The protein belongs to the ATPase gamma chain family. In terms of assembly, F-type ATPases have 2 components, CF(1) - the catalytic core - and CF(0) - the membrane proton channel. CF(1) has five subunits: alpha(3), beta(3), gamma(1), delta(1), epsilon(1). CF(0) has three main subunits: a, b and c.

It is found in the cell inner membrane. Produces ATP from ADP in the presence of a proton gradient across the membrane. The gamma chain is believed to be important in regulating ATPase activity and the flow of protons through the CF(0) complex. This chain is ATP synthase gamma chain, found in Haemophilus influenzae (strain ATCC 51907 / DSM 11121 / KW20 / Rd).